A 606-amino-acid chain; its full sequence is Mitogen-activated protein kinase kinase kinase 7 (606 aa).

The interaction with MAPK8IP1 stretch occupies residues 1–300 (MSTASAASSS…FPGADEPLQY (300 aa)). The 256-residue stretch at 36-291 (IEVEEVVGRG…KIMTHLMRYF (256 aa)) folds into the Protein kinase domain. Residues 42–50 (VGRGAFGVV) and lysine 63 each bind ATP. A Glycyl lysine isopeptide (Lys-Gly) (interchain with G-Cter in ubiquitin) cross-link involves residue lysine 72. The Proton acceptor role is filled by aspartate 156. A Glycyl lysine isopeptide (Lys-Gly) (interchain with G-Cter in ubiquitin) cross-link involves residue lysine 158. Phosphothreonine; by autocatalysis occurs at positions 184 and 187. Serine 192 carries the post-translational modification Phosphoserine; by autocatalysis. Residue lysine 209 forms a Glycyl lysine isopeptide (Lys-Gly) (interchain with G-Cter in ubiquitin) linkage. Disordered stretches follow at residues 301 to 338 (PCQY…MEQV) and 354 to 391 (KNQA…MSAD). A compositionally biased stretch (polar residues) spans 306-338 (DEGQSNSATSTGSFMDIASTNTSNKSDTNMEQV). Residues 361–375 (SDSGRLSLGASRGSS) show a composition bias toward low complexity. Residues serine 367, serine 389, and serine 439 each carry the phosphoserine modification. The span at 443–452 (LTVTGTEPGQ) shows a compositional bias: polar residues. The segment at 443 to 492 (LTVTGTEPGQVSSRSSSPSVRMITTSGPTSEKPARSLPWTPDDSTDTNGS) is disordered. Over residues 453 to 463 (VSSRSSSPSVR) the composition is skewed to low complexity. Serine 455 is modified (phosphoserine).

Belongs to the protein kinase superfamily. STE Ser/Thr protein kinase family. MAP kinase kinase kinase subfamily. In terms of assembly, can form homodimer. Binds both upstream activators and downstream substrates in multimolecular complexes. Interacts with TAB1/MAP3K7IP1, TAB2/MAP3K7IP2 and TAB3/MAP3K7IP3. Identified in the TRIKA2 complex composed of MAP3K7/TAK1, TAB1/MAP3K7IP1 and TAB2/MAP3K7IP2. Interacts with PPM1L and PPM1B/PP2CB. Interaction with PP2A and PPP6C leads to its repressed activity. Interacts with TRAF6 and TAB1/MAP3K7IP1; during IL-1 signaling. Interacts with TAOK1 and TAOK2; interaction with TAOK2 interferes with MAP3K7 interaction with IKKA, thus preventing NF-kappa-B activation. Interacts with DYNC2I2 (via WD domains). Interacts with CYLD and RBCK1. Interacts with TGFBR1; induces MAP3K7/TAK1 activation by TRAF6. Interacts with MAPK8IP1 and SMAD6. Interacts with isoform 1 of VRK2. Interacts with DAB2; the interaction is induced by TGF-beta stimulation and may mediate TGF-beta stimulated JNK activation. Interacts with TRIM5. Part of a complex containing ITCH, NDFIP1 and MAP3K7. Interacts with PLEKHM1 (via N- and C-terminus). Found in a complex with SH3RF1, RAC2, MAP2K7/MKK7, MAPK8IP1/JIP1, MAPK8/JNK1 and MAPK9/JNK2. Interacts with SASH1. Interacts with RIPK1. Mg(2+) is required as a cofactor. Post-translationally, association with TAB1/MAP3K7IP1 promotes autophosphorylation at Ser-192 and subsequent activation. Association with TAB2/MAP3K7IP2, itself associated with free unanchored Lys-63 polyubiquitin chain, promotes autophosphorylation and subsequent activation of MAP3K7. Dephosphorylation at Ser-192 by PPM1B/PP2CB and at Thr-187 by PP2A and PPP6C leads to inactivation. Deubiquitinated by USP19; leading to negative regulation of TNF-alpha- and IL-1beta-triggered NF-kappa-B activation. In terms of processing, 'Lys-48'-linked polyubiquitination at Lys-72 is induced by TNFalpha, and leads to proteasomal degradation. Undergoes 'Lys-48'-linked polyubiquitination catalyzed by ITCH. 'Lys-63'-linked polyubiquitination at Lys-158 by TRIM8 does not lead to proteasomal degradation but contributes to autophosphorylation and activation. Deubiquitinated by CYLD, a protease that selectively cleaves 'Lys-63'-linked ubiquitin chains.

It localises to the cytoplasm. The protein resides in the cell membrane. The catalysed reaction is L-seryl-[protein] + ATP = O-phospho-L-seryl-[protein] + ADP + H(+). It catalyses the reaction L-threonyl-[protein] + ATP = O-phospho-L-threonyl-[protein] + ADP + H(+). With respect to regulation, activated by pro-inflammatory cytokines and in response to physical and chemical stresses, including osmotic stress, oxidative stress, arsenic and ultraviolet light irradiation. Activated by 'Lys-63'-linked polyubiquitination and by autophosphorylation. Association with TAB1/MAP3K7IP1 and TAB2/MAP3K7IP2 promotes activation through autophosphorylation, whereas PPM1B/PP2CB, PP2A and PPP6C dephosphorylation leads to inactivation. Ceramides are also able to activate MAP3K7/TAK1. Functionally, serine/threonine kinase which acts as an essential component of the MAP kinase signal transduction pathway. Plays an important role in the cascades of cellular responses evoked by changes in the environment. Mediates signal transduction of TRAF6, various cytokines including interleukin-1 (IL-1), transforming growth factor-beta (TGFB), TGFB-related factors like BMP2 and BMP4, toll-like receptors (TLR), tumor necrosis factor receptor CD40 and B-cell receptor (BCR). Once activated, acts as an upstream activator of the MKK/JNK signal transduction cascade and the p38 MAPK signal transduction cascade through the phosphorylation and activation of several MAP kinase kinases like MAP2K1/MEK1, MAP2K3/MKK3, MAP2K6/MKK6 and MAP2K7/MKK7. These MAP2Ks in turn activate p38 MAPKs and c-jun N-terminal kinases (JNKs); both p38 MAPK and JNK pathways control the transcription factors activator protein-1 (AP-1). Independently of MAP2Ks and p38 MAPKs, acts as a key activator of NF-kappa-B by promoting activation of the I-kappa-B-kinase (IKK) core complex. Mechanistically, recruited to polyubiquitin chains of RIPK2 and IKBKG/NEMO via TAB2/MAP3K7IP2 and TAB3/MAP3K7IP3, and catalyzes phosphorylation and activation of IKBKB/IKKB component of the IKK complex, leading to NF-kappa-B activation. In osmotic stress signaling, plays a major role in the activation of MAPK8/JNK1, but not that of NF-kappa-B. Promotes TRIM5 capsid-specific restriction activity. Phosphorylates RIPK1 at 'Ser-321' which positively regulates RIPK1 interaction with RIPK3 to promote necroptosis but negatively regulates RIPK1 kinase activity and its interaction with FADD to mediate apoptosis. Phosphorylates STING1 in response to cGAMP-activation, promoting association between STEEP1 and STING1 and STING1 translocation to COPII vesicles. This chain is Mitogen-activated protein kinase kinase kinase 7 (Map3k7), found in Rattus norvegicus (Rat).